Reading from the N-terminus, the 85-residue chain is UPF0213 protein NP_0776A (85 aa).

The GIY-YIG domain occupies 3–78; the sequence is ADHYVYVLSC…KSLSRAKKER (76 aa). The segment covering 58–70 has biased composition (basic and acidic residues); that stretch reads KSAAMQREHEIKS. A disordered region spans residues 58-85; that stretch reads KSAAMQREHEIKSLSRAKKERLVADETG.

It belongs to the UPF0213 family.

The sequence is that of UPF0213 protein NP_0776A from Natronomonas pharaonis (strain ATCC 35678 / DSM 2160 / CIP 103997 / JCM 8858 / NBRC 14720 / NCIMB 2260 / Gabara) (Halobacterium pharaonis).